Reading from the N-terminus, the 295-residue chain is 4-diphosphocytidyl-2-C-methyl-D-erythritol kinase (295 aa).

The active site involves Lys-25. Residue 108-118 (PMGSGLGGGSS) coordinates ATP. Asp-150 is an active-site residue.

This sequence belongs to the GHMP kinase family. IspE subfamily.

It catalyses the reaction 4-CDP-2-C-methyl-D-erythritol + ATP = 4-CDP-2-C-methyl-D-erythritol 2-phosphate + ADP + H(+). Its pathway is isoprenoid biosynthesis; isopentenyl diphosphate biosynthesis via DXP pathway; isopentenyl diphosphate from 1-deoxy-D-xylulose 5-phosphate: step 3/6. In terms of biological role, catalyzes the phosphorylation of the position 2 hydroxy group of 4-diphosphocytidyl-2C-methyl-D-erythritol. The chain is 4-diphosphocytidyl-2-C-methyl-D-erythritol kinase from Pasteurella multocida (strain Pm70).